Consider the following 417-residue polypeptide: Protein translocase subunit SecD (417 aa).

6 helical membrane-spanning segments follow: residues 9-29, 236-256, 258-278, 288-308, 333-353, and 360-380; these read LLVSVLAIVIAFAVFIKPLVS, ASMKAFAIGLAGVFLFMLLYY, LSGLVADIVLLLYTLLLLAVM, PGMAGIILSIGMAVDANVLIF, FTTILDSNVTTLMAAAVLFYL, and GFAVTLALGVLISMFTAVTVT.

Belongs to the SecD/SecF family. SecD subfamily. As to quaternary structure, forms a complex with SecF. Part of the essential Sec protein translocation apparatus which comprises SecA, SecYEG and auxiliary proteins SecDF. Other proteins may also be involved.

It is found in the cell membrane. Its function is as follows. Part of the Sec protein translocase complex. Interacts with the SecYEG preprotein conducting channel. SecDF uses the proton motive force (PMF) to complete protein translocation after the ATP-dependent function of SecA. The sequence is that of Protein translocase subunit SecD from Acidaminococcus fermentans (strain ATCC 25085 / DSM 20731 / CCUG 9996 / CIP 106432 / VR4).